The primary structure comprises 96 residues: MLNMNLQLLASKKGVGSSKNGRDSISKRLGVKRFDGQLVTAGSIIVRQRGTKIHPGTNVGKGSDDTLFALVDGTVKFERKDKKRKKVSIYPVAIAE.

The propeptide occupies 1–9 (MLNMNLQLL).

Belongs to the bacterial ribosomal protein bL27 family. Post-translationally, the N-terminus is cleaved by ribosomal processing cysteine protease Prp.

The polypeptide is Large ribosomal subunit protein bL27 (Clostridioides difficile (strain 630) (Peptoclostridium difficile)).